The following is a 214-amino-acid chain: tRNA (guanine-N(7)-)-methyltransferase (214 aa).

Positions 43, 68, 95, and 117 each coordinate S-adenosyl-L-methionine. Asp117 is an active-site residue. Substrate-binding positions include Lys121, Asp153, and 190–193; that span reads TEYE.

Belongs to the class I-like SAM-binding methyltransferase superfamily. TrmB family.

The enzyme catalyses guanosine(46) in tRNA + S-adenosyl-L-methionine = N(7)-methylguanosine(46) in tRNA + S-adenosyl-L-homocysteine. It participates in tRNA modification; N(7)-methylguanine-tRNA biosynthesis. Functionally, catalyzes the formation of N(7)-methylguanine at position 46 (m7G46) in tRNA. This is tRNA (guanine-N(7)-)-methyltransferase from Staphylococcus aureus (strain USA300).